The chain runs to 200 residues: Large ribosomal subunit protein uL4 (200 aa).

Residues 42–65 (TRAQKTRSDVSGGGAKPWRQKGTG) are disordered.

Belongs to the universal ribosomal protein uL4 family. As to quaternary structure, part of the 50S ribosomal subunit.

Its function is as follows. One of the primary rRNA binding proteins, this protein initially binds near the 5'-end of the 23S rRNA. It is important during the early stages of 50S assembly. It makes multiple contacts with different domains of the 23S rRNA in the assembled 50S subunit and ribosome. Functionally, forms part of the polypeptide exit tunnel. The polypeptide is Large ribosomal subunit protein uL4 (Photobacterium profundum (strain SS9)).